Here is a 442-residue protein sequence, read N- to C-terminus: UDP-N-acetylglucosamine 1-carboxyvinyltransferase (442 aa).

22 to 23 (KN) serves as a coordination point for phosphoenolpyruvate. Arg-94 contacts UDP-N-acetyl-alpha-D-glucosamine. Residue Asp-119 is the Proton donor of the active site. UDP-N-acetyl-alpha-D-glucosamine is bound by residues Asp-309 and Val-331.

This sequence belongs to the EPSP synthase family. MurA subfamily.

Its subcellular location is the cytoplasm. The enzyme catalyses phosphoenolpyruvate + UDP-N-acetyl-alpha-D-glucosamine = UDP-N-acetyl-3-O-(1-carboxyvinyl)-alpha-D-glucosamine + phosphate. It functions in the pathway cell wall biogenesis; peptidoglycan biosynthesis. Functionally, cell wall formation. Adds enolpyruvyl to UDP-N-acetylglucosamine. The protein is UDP-N-acetylglucosamine 1-carboxyvinyltransferase of Chlamydia muridarum (strain MoPn / Nigg).